The sequence spans 524 residues: MSKNTEGMGRAVVIGAGLGGLAAAMRLGAKGYKVTVVDRLDRPGGRGSSITKGGHRFDLGPTIVTVPDRLRELWADCGRDFDKDVSLVPMEPFYTIDFPDGEKYTAYGDDAKVKAEVARISPGDVEGFRHFMWDAKARYEFGYENLGRKPMSKLWDLIKVLPTFGWLRADRSVYGHAKKMVKDDHLRFALSFHPLFIGGDPFHVTSMYILVSQLEKKFGVHYAIGGVQAIADAMAKVITDQGGEMRLNTEVDEILVSRDGKATGIRLMDGTELPAQVVVSNADAGHTYKRLLRNRDRWRWTDEKLDKKRWSMGLFVWYFGTKGTAKMWKDVGHHTVVVGPRYKEHVQDIFIKGELAEDMSLYVHRPSVTDPTAAPKGDDTFYVLSPVPNLGFDNGVDWSVEAEKYKAKVLKVIEERLLPGVAEKITEEVVFTPETFRDRYLSPLGAGFSLEPRILQSAWFRPHNASEEVDGLYLVGAGTHPGAGVPSVIGSGELVAQMIPDAPKPETPAAAAPKARTPRAKAAQ.

12–45 provides a ligand contact to FAD; it reads VVIGAGLGGLAAAMRLGAKGYKVTVVDRLDRPGG. The segment at 500–524 is disordered; that stretch reads PDAPKPETPAAAAPKARTPRAKAAQ. Over residues 507 to 524 the composition is skewed to low complexity; sequence TPAAAAPKARTPRAKAAQ.

Belongs to the carotenoid/retinoid oxidoreductase family. FAD is required as a cofactor.

It catalyses the reaction 15-cis-phytoene + 3 A = all-trans-neurosporene + 3 AH2. The protein operates within carotenoid biosynthesis. Its activity is regulated as follows. Is inhibited by diphenylamine (DPA). Is also slightly inhibited by NAD, NADP or ATP in the presence of FAD. In terms of biological role, converts phytoene into all-trans-neurosporene as the major product, via the intermediary of phytofluene and zeta-carotene, by the introduction of three double bonds. Both intermediates, phytofluene and zeta-carotene, can be used as substrates and converted to neurosporene. 1,2-epoxy phytoene is also a suitable substrate whereas the C30 diapophytoene is not. This chain is Phytoene desaturase (neurosporene-forming) (crtI), found in Rhodobacter capsulatus (strain ATCC BAA-309 / NBRC 16581 / SB1003).